Consider the following 575-residue polypeptide: Delta-1-pyrroline-5-carboxylate dehydrogenase, mitochondrial (575 aa).

An NAD(+)-binding site is contributed by 297–302 (GKIQSG). Residue glutamate 317 is the Proton acceptor of the active site. Cysteine 351 acts as the Nucleophile in catalysis.

The protein belongs to the aldehyde dehydrogenase family.

It is found in the mitochondrion inner membrane. The catalysed reaction is L-glutamate 5-semialdehyde + NAD(+) + H2O = L-glutamate + NADH + 2 H(+). It participates in amino-acid degradation; L-proline degradation into L-glutamate; L-glutamate from L-proline: step 2/2. In Saccharomyces cerevisiae (strain ATCC 204508 / S288c) (Baker's yeast), this protein is Delta-1-pyrroline-5-carboxylate dehydrogenase, mitochondrial (PUT2).